The sequence spans 324 residues: Bacilliredoxin reductase Bdr (324 aa).

At cysteine 220 the chain carries S-bacillithiol cysteine disulfide.

In terms of assembly, interacts with BrxC. It depends on FAD as a cofactor. C-terminal Cys can react with bacillithiol (BSH) to form mixed disulfides. S-bacillithiolation protects Cys residues against overoxidation by acting as a redox switch in response to oxidative stress.

Functionally, S-bacillithiolation is the formation of mixed disulfide bonds between protein thiols and the general thiol reductant bacillithiol (BSH) under oxidative stress. BSH is an equivalent of glutathione (GSH) in Firmicutes. This protein is a NADPH-dependent bacilliredoxin reductase, which debacillithiolates (removes BSH) the S-bacillithiolated BrxB (BrxB-SSB), and to a lesser extent BrxC (BrxC-SSB). Involved in a redox cascade increasing the efficacy of BrxB function by reducing BrxB-SSB and thus reactivating it. Has NADPH-dependent oxidase activity under aerobic conditions producing hydrogen peroxide (H(2)O(2)). The sequence is that of Bacilliredoxin reductase Bdr from Bacillus subtilis (strain 168).